Here is a 667-residue protein sequence, read N- to C-terminus: Serine/threonine-protein kinase BUR1 (667 aa).

In terms of domain architecture, Protein kinase spans Tyr60–Phe378. Residues Leu66–Val74 and Lys89 each bind ATP. The active-site Proton acceptor is Asp207. Residues His408 to Tyr667 form a disordered region. Basic and acidic residues predominate over residues Lys432 to Gln443. Positions Asn494–Arg516 are enriched in polar residues. Low complexity predominate over residues Tyr541–Arg556. Polar residues-rich tracts occupy residues Asp582 to Ser594, Ser602 to Ile611, and Asn622 to Gln632. A compositionally biased stretch (basic and acidic residues) spans Asp633 to Tyr667.

Belongs to the protein kinase superfamily. CMGC Ser/Thr protein kinase family. CDC2/CDKX subfamily.

Its subcellular location is the nucleus. It carries out the reaction L-seryl-[protein] + ATP = O-phospho-L-seryl-[protein] + ADP + H(+). The catalysed reaction is L-threonyl-[protein] + ATP = O-phospho-L-threonyl-[protein] + ADP + H(+). It catalyses the reaction [DNA-directed RNA polymerase] + ATP = phospho-[DNA-directed RNA polymerase] + ADP + H(+). Its function is as follows. Serine/threonine-protein kinase involved in transcription regulation. Phosphorylates the UBC2/RAD6 ubiquitin-conjugating enzyme (E2), leading to monoubiquitination of histone H2B and the silencing of telomeric-associated genes. Also required for histone H3 methylation. Necessary for the recovery from pheromone-induced growth arrest in the cell cycle G1 phase. This is Serine/threonine-protein kinase BUR1 (BUR1) from Candida glabrata (strain ATCC 2001 / BCRC 20586 / JCM 3761 / NBRC 0622 / NRRL Y-65 / CBS 138) (Yeast).